The primary structure comprises 202 residues: Solute carrier family 66 member 3 (202 aa).

An N-terminal signal peptide occupies residues 1–19 (MEAALLGLCNWSTLGVCAA). A run of 4 helical transmembrane segments spans residues 33-53 (SARGLSLPSLLLELAGFLVFL), 64-84 (LTYLEYPILIAQDVILLLCIF), 97-117 (IAVLVSSWFILALQKWIIDLA), and 171-191 (FTILLRFVIMLALNIWVTVTV).

The protein resides in the membrane. This Homo sapiens (Human) protein is Solute carrier family 66 member 3.